The chain runs to 655 residues: Endoplasmic reticulum chaperone BiP (655 aa).

The first 19 residues, 1–19 (MMKFTVVAAALLLLGAVRA), serve as a signal peptide directing secretion. The tract at residues 1–81 (MMKFTVVAAA…EGERLIGDAA (81 aa)) is required for interaction with ELAPOR1. 37–40 (GTTY) contacts ATP. The residue at position 87 (S87) is a Phosphoserine. ATP is bound at residue K97. An N6-acetyllysine modification is found at K126. Positions 126–281 (KPYIQVDIGG…KKKTGKDVRK (156 aa)) are nucleotide-binding (NBD). Y161 is subject to 3'-nitrotyrosine. K214 carries the post-translational modification N6-acetyllysine. Residue 228–230 (GGT) participates in ATP binding. Position 272 is an N6-acetyllysine (K272). Residue 294-301 (EKAKRALS) participates in ATP binding. An N6-acetyllysine modification is found at K327. A Glycyl lysine isopeptide (Lys-Gly) (interchain with G-Cter in SUMO2) cross-link involves residue K353. Residue K354 is modified to N6-acetyllysine; alternate. Residue K354 forms a Glycyl lysine isopeptide (Lys-Gly) (interchain with G-Cter in SUMO1); alternate linkage. 365–368 (GSTR) is an ATP binding site. Positions 410–420 (QDTGDLVLLDV) are interdomain linker. The substrate-binding (SBD) stretch occupies residues 421–501 (CPLTLGIETV…PRGVPQIEVT (81 aa)). Residue K448 is modified to N6-succinyllysine. Position 493 is an omega-N-methylarginine (R493). T519 is subject to O-AMP-threonine; alternate. Position 519 is a phosphothreonine; alternate (T519). An N6,N6,N6-trimethyllysine; by METTL21A; in vitro modification is found at K586. Position 586 is an N6,N6-dimethyllysine; alternate (K586). At K586 the chain carries N6-methyllysine; alternate. Residue K592 is modified to N6-methyllysine. The disordered stretch occupies residues 632 to 655 (ISKLYGSGGPPPTGEEDTSEKDEL). Phosphothreonine occurs at positions 644 and 649. Residues 645–655 (GEEDTSEKDEL) are compositionally biased toward acidic residues. A Phosphoserine modification is found at S650. The short motif at 652-655 (KDEL) is the Prevents secretion from ER element.

This sequence belongs to the heat shock protein 70 family. Monomer and homooligomer; homooligomerization via the interdomain linker inactivates the chaperone activity and acts as a storage of HSPA5/BiP molecules. Interacts with DNAJC1 (via J domain). Component of an EIF2 complex at least composed of CELF1/CUGBP1, CALR, CALR3, EIF2S1, EIF2S2, HSP90B1 and HSPA5. Part of a large chaperone multiprotein complex comprising DNAJB11, HSP90B1, HSPA5, HYOU, PDIA2, PDIA4, PDIA6, PPIB, SDF2L1, UGGT1 and very small amounts of ERP29, but not, or at very low levels, CALR nor CANX. Interacts with TMEM132A and TRIM21. May form a complex with ERLEC1, OS9, SEL1L and SYVN1. Interacts with DNAJC10. Interacts with DNAJB9/ERdj4; leading to recruit HSPA5/BiP to ERN1/IRE1. Interacts with ERN1/IRE1 (via luminal domain); the interaction takes place following interaction with DNAJB9/ERdj4 and leads to inactivate ERN1/IRE1, the interaction also competitively inhibits ERN1 interaction with MANF. Interacts directly with MANF (via SAP domain); the interaction inhibits ATP binding to HSPA5/BiP and subsequent nucleotide exchange. Interacts with ERN1 (via luminal domain); the interaction competitively inhibits ERN1 interaction with MANF. Interacts with EIF2AK3/PERK (via luminal domain); interaction leads to inactivate EIF2AK3/PERK. Interacts with MX1. Interacts with METTL23. Interacts with CEMIP; the interaction induces calcium leakage from the endoplasmic reticulum and cell migration. Interacts with PCSK4 form; the interaction takes place in the endoplasmic reticulum. Interacts with CIPC. Interacts with CCDC88B (via C-terminus); the interaction opposes ERN1-mediated JNK activation, protecting against apoptosis. Interacts with INPP5K; necessary for INPP5K localization at the endoplasmic reticulum. Interacts with MANF; the interaction is direct. Interacts with LOXL2; leading to activate the ERN1/IRE1-XBP1 pathway of the unfolded protein response. Interacts with CLU under stressed condition; interaction increases CLU protein stability; facilitates its retrotranslocation and redistribution to the mitochondria; cooperatively suppress stress-induced apoptosis by stabilizing mitochondrial membrane integrity. Interacts with CCDC47. Interacts with CLN3. Interacts with ELAPOR1; may regulate the function of HSPA5 in apoptosis and cell proliferation. Interacts with CASP7. Interacts with ILDR2; the interaction stabilizes ILDR2 expression. Interacts with ADAM7. In unstressed cells, AMPylation at Thr-519 by FICD inactivates the chaperome activity: AMPylated form is locked in a relatively inert state and only weakly stimulated by J domain-containing proteins. In response to endoplasmic reticulum stress, de-AMPylation by the same protein, FICD, restores the chaperone activity. As to expression, expressed in sperm (at protein level).

The protein resides in the endoplasmic reticulum lumen. Its subcellular location is the melanosome. It localises to the cytoplasm. It is found in the cell surface. The enzyme catalyses ATP + H2O = ADP + phosphate + H(+). Its activity is regulated as follows. The chaperone activity is regulated by ATP-induced allosteric coupling of the nucleotide-binding (NBD) and substrate-binding (SBD) domains. In the ADP-bound and nucleotide-free (apo) states, the two domains have little interaction. In contrast, in the ATP-bound state the two domains are tightly coupled, which results in drastically accelerated kinetics in both binding and release of polypeptide substrates. J domain-containing co-chaperones (DNAJB9/ERdj4 or DNAJC10/ERdj5) stimulate the ATPase activity and are required for efficient substrate recognition by HSPA5/BiP. Homooligomerization inactivates participating HSPA5/BiP protomers and probably act as reservoirs to store HSPA5/BiP molecules when they are not needed by the cell. Endoplasmic reticulum chaperone that plays a key role in protein folding and quality control in the endoplasmic reticulum lumen. Involved in the correct folding of proteins and degradation of misfolded proteins via its interaction with DNAJC10/ERdj5, probably to facilitate the release of DNAJC10/ERdj5 from its substrate. Acts as a key repressor of the EIF2AK3/PERK and ERN1/IRE1-mediated unfolded protein response (UPR). In the unstressed endoplasmic reticulum, recruited by DNAJB9/ERdj4 to the luminal region of ERN1/IRE1, leading to disrupt the dimerization of ERN1/IRE1, thereby inactivating ERN1/IRE1. Also binds and inactivates EIF2AK3/PERK in unstressed cells. Accumulation of misfolded protein in the endoplasmic reticulum causes release of HSPA5/BiP from ERN1/IRE1 and EIF2AK3/PERK, allowing their homodimerization and subsequent activation. Plays an auxiliary role in post-translational transport of small presecretory proteins across endoplasmic reticulum (ER). May function as an allosteric modulator for SEC61 channel-forming translocon complex, likely cooperating with SEC62 to enable the productive insertion of these precursors into SEC61 channel. Appears to specifically regulate translocation of precursors having inhibitory residues in their mature region that weaken channel gating. May also play a role in apoptosis and cell proliferation. The polypeptide is Endoplasmic reticulum chaperone BiP (Mus musculus (Mouse)).